We begin with the raw amino-acid sequence, 5233 residues long: E3 ubiquitin-protein ligase highwire (5233 aa).

A disordered region spans residues valine 197–proline 230. Over residues alanine 205–alanine 214 the composition is skewed to basic and acidic residues. Phosphoserine is present on residues serine 213 and serine 216. RCC1 repeat units lie at residues asparagine 615–valine 666, aspartate 669–lysine 724, and lysine 768–leucine 818. The segment at arginine 680–lysine 700 is disordered. Residues asparagine 689–lysine 700 are compositionally biased toward basic residues. The segment at threonine 900–proline 950 is disordered. Residues aspartate 908–lysine 917 are compositionally biased toward polar residues. RCC1 repeat units follow at residues glutamate 931–leucine 983, alanine 984–serine 1033, and glycine 1035–proline 1084. Disordered regions lie at residues leucine 1051–proline 1109 and alanine 1287–leucine 1327. A compositionally biased stretch (polar residues) spans arginine 1092–glycine 1103. Low complexity predominate over residues alanine 1287–glycine 1302. The PHR domain 1 stretch occupies residues asparagine 1436 to leucine 1587. Residues serine 1681 to arginine 1718 are disordered. The span at valine 1699 to lysine 1709 shows a compositional bias: polar residues. A PHR domain 2 region spans residues alanine 2014–serine 2169. Disordered regions lie at residues serine 2329 to asparagine 2353 and asparagine 2580 to glutamine 2604. Low complexity predominate over residues glutamine 2336–valine 2350. The required for interaction with Rae1 stretch occupies residues alanine 2885–glycine 4082. One copy of the Filamin repeat lies at tryptophan 2906–lysine 3000. Disordered regions lie at residues proline 3005 to arginine 3024, lysine 3117 to glutamine 3210, glycine 3277 to threonine 3333, threonine 3348 to proline 3378, proline 3551 to arginine 3587, and alanine 3901 to valine 3936. The span at lysine 3176–arginine 3191 shows a compositional bias: basic and acidic residues. Over residues glutamate 3192–glutamine 3210 the composition is skewed to acidic residues. Over residues proline 3282–glutamate 3292 the composition is skewed to polar residues. Low complexity predominate over residues threonine 3348–serine 3371. A compositionally biased stretch (low complexity) spans glutamine 3917 to glutamine 3932. In terms of domain architecture, DOC spans histidine 4195–histidine 4374. 2 disordered regions span residues alanine 4633–leucine 4655 and leucine 4680–proline 4702. Residues serine 4638 to glycine 4652 are compositionally biased toward gly residues. Zn(2+)-binding residues include cysteine 4991, cysteine 4994, cysteine 5009, histidine 5011, histidine 5014, cysteine 5017, cysteine 5038, cysteine 5041, cysteine 5101, and cysteine 5104. The RING-type; atypical zinc finger occupies cysteine 4991–lysine 5042. The tandem cysteine domain stretch occupies residues tyrosine 5096 to glutamine 5231. Residue cysteine 5115 is part of the active site. Zn(2+) contacts are provided by cysteine 5130, cysteine 5133, cysteine 5142, histidine 5145, cysteine 5154, cysteine 5157, and cysteine 5158. Cysteine 5165 is a catalytic residue. The Zn(2+) site is built by cysteine 5172, cysteine 5175, cysteine 5193, cysteine 5207, histidine 5213, cysteine 5224, and cysteine 5227.

This sequence belongs to the RING-Cys relay (RCR) family. In terms of assembly, component of an E3 ubiquitin ligase complex composed of hiw, Rae1 and Fsn. Interacts with Rae1; the interaction with Rae1 may protect hiw from autophagy-mediated degradation. In terms of tissue distribution, express throughout the nervous system. Stage 13 embryos show expression in the central nervous system (CNS) at the longitudinal axon tracts around which the synaptic neuropil forms. Expression outside the CNS starts at stage 16 in presynaptic terminals at the periactive zone which surround the active zone. Expression at neuromuscular junctions (NMJ) and in the CNS is also seen in third instar larvae (at protein level).

It is found in the synapse. Its subcellular location is the cell projection. The protein resides in the axon. It carries out the reaction [E2 ubiquitin-conjugating enzyme]-S-ubiquitinyl-L-cysteine + [acceptor protein]-L-threonine = [E2 ubiquitin-conjugating enzyme]-L-cysteine + [acceptor protein]-3-O-ubiquitinyl-L-threonine.. It functions in the pathway protein modification; protein ubiquitination. In terms of biological role, atypical E3 ubiquitin-protein ligase which specifically mediates ubiquitination of threonine and serine residues on target proteins, instead of ubiquitinating lysine residues. Shows esterification activity towards both threonine and serine, with a preference for threonine, and acts via two essential catalytic cysteine residues that relay ubiquitin to its substrate via thioester intermediates. Required in the presynaptic motoneuron to down-regulate the levels of wnd and restrain synaptic terminal growth at the neuromuscular junction (NMJ) together with Rae1 and Fsn. This Drosophila melanogaster (Fruit fly) protein is E3 ubiquitin-protein ligase highwire.